The following is a 43-amino-acid chain: Protein PsbN (43 aa).

The chain crosses the membrane as a helical span at residues 7–27; the sequence is LIIFIASLLLGLTGYSIYTAF.

It belongs to the PsbN family.

Its subcellular location is the plastid. The protein resides in the chloroplast thylakoid membrane. Functionally, may play a role in photosystem I and II biogenesis. This chain is Protein PsbN, found in Guillardia theta (Cryptophyte).